We begin with the raw amino-acid sequence, 341 residues long: MDTVRIAVVGAGVMGLSTAVCIFKLVPGCSITVISDKFTPETTSDVAAGMLIPPVYPDTPIHKQKQWFKDTFDHLFAIANSAEAKDAGVLLVSGWQIFQSAPTEEVPFWADVVLGFRKMTKNELKKFPQHVCGQAFTTLKCEGPTYLPWLEKRVKGSGGLVLTRRVEDLWELHPSFNIVVNCSGLGSKQLVGDMEIFPVRGQVLKVQAPWVKHFIRDGSGLTYIYPGIANVTLGGTRQKGDWNLSPNAEISKQILSRCCALEPSLRGACDIREKVGLRPSRPGVRLEKELLVQGSQRLPVVHNYGHGSGGIAMHWGTALEAARLVSECVQALRTPAPKSKL.

FAD-binding residues include aspartate 36, lysine 37, threonine 43, serine 44, methionine 50, glycine 307, and isoleucine 311. Residues 339–341 carry the Microbody targeting signal motif; sequence SKL.

The protein belongs to the DAMOX/DASOX family. Homotetramer. Interacts with PEX5; the interaction is direct and required for localization of DDO to the peroxisome. FAD is required as a cofactor. Expressed in epithelial cells of the renal proximal tubules (not detected in the glomeruli or renal distal tubules), liver, right atrium of heart, lung, chief cells of the gastric mucosa, choroid plexus, pia mater, brain stem, midbrain, pons, medulla oblongata, hypothalamus, hippocampus, cerebral cortex, cerebellum, ependyma, olfactory bulb and the pituitary, pineal, thyroid and adrenal glands (at protein level).

The protein resides in the peroxisome matrix. Its subcellular location is the cytoplasm. It is found in the cytosol. The enzyme catalyses D-aspartate + O2 + H2O = oxaloacetate + H2O2 + NH4(+). It carries out the reaction D-glutamate + O2 + H2O = H2O2 + 2-oxoglutarate + NH4(+). In terms of biological role, selectively catalyzes the oxidative deamination of acidic amino acids. Suppresses the level of D-aspartate in the brain, an amino acid that can act as an agonist for glutamate receptors. Protects the organism from the toxicity of D-amino acids. May also function in the intestine. This is D-aspartate oxidase (DDO) from Sus scrofa (Pig).